A 391-amino-acid chain; its full sequence is Isocitrate dehydrogenase [NADP] (391 aa).

Residues serine 102, asparagine 104, arginine 108, arginine 118, and arginine 142 each coordinate D-threo-isocitrate. Aspartate 283 contributes to the Mg(2+) binding site.

Belongs to the isocitrate and isopropylmalate dehydrogenases family. As to quaternary structure, homodimer. Mg(2+) is required as a cofactor. It depends on Mn(2+) as a cofactor.

The catalysed reaction is D-threo-isocitrate + NADP(+) = 2-oxoglutarate + CO2 + NADPH. Its function is as follows. Catalyzes the oxidative decarboxylation of isocitrate to 2-oxoglutarate and carbon dioxide with the concomitant reduction of NADP(+). The sequence is that of Isocitrate dehydrogenase [NADP] (icd) from Streptococcus salivarius.